We begin with the raw amino-acid sequence, 156 residues long: Crossover junction endodeoxyribonuclease RuvC (156 aa).

Residues Asp-9, Glu-69, and Asp-141 contribute to the active site. Positions 9, 69, and 141 each coordinate Mg(2+).

Belongs to the RuvC family. Homodimer which binds Holliday junction (HJ) DNA. The HJ becomes 2-fold symmetrical on binding to RuvC with unstacked arms; it has a different conformation from HJ DNA in complex with RuvA. In the full resolvosome a probable DNA-RuvA(4)-RuvB(12)-RuvC(2) complex forms which resolves the HJ. Mg(2+) serves as cofactor.

It is found in the cytoplasm. The enzyme catalyses Endonucleolytic cleavage at a junction such as a reciprocal single-stranded crossover between two homologous DNA duplexes (Holliday junction).. The RuvA-RuvB-RuvC complex processes Holliday junction (HJ) DNA during genetic recombination and DNA repair. Endonuclease that resolves HJ intermediates. Cleaves cruciform DNA by making single-stranded nicks across the HJ at symmetrical positions within the homologous arms, yielding a 5'-phosphate and a 3'-hydroxyl group; requires a central core of homology in the junction. The consensus cleavage sequence is 5'-(A/T)TT(C/G)-3'. Cleavage occurs on the 3'-side of the TT dinucleotide at the point of strand exchange. HJ branch migration catalyzed by RuvA-RuvB allows RuvC to scan DNA until it finds its consensus sequence, where it cleaves and resolves the cruciform DNA. In Acaryochloris marina (strain MBIC 11017), this protein is Crossover junction endodeoxyribonuclease RuvC.